The primary structure comprises 251 residues: Ubiquinone/menaquinone biosynthesis C-methyltransferase UbiE (251 aa).

Residues Thr-74, Asp-95, 123-124, and Ser-140 contribute to the S-adenosyl-L-methionine site; that span reads NA.

It belongs to the class I-like SAM-binding methyltransferase superfamily. MenG/UbiE family.

It carries out the reaction a 2-demethylmenaquinol + S-adenosyl-L-methionine = a menaquinol + S-adenosyl-L-homocysteine + H(+). The catalysed reaction is a 2-methoxy-6-(all-trans-polyprenyl)benzene-1,4-diol + S-adenosyl-L-methionine = a 5-methoxy-2-methyl-3-(all-trans-polyprenyl)benzene-1,4-diol + S-adenosyl-L-homocysteine + H(+). It participates in quinol/quinone metabolism; menaquinone biosynthesis; menaquinol from 1,4-dihydroxy-2-naphthoate: step 2/2. It functions in the pathway cofactor biosynthesis; ubiquinone biosynthesis. Methyltransferase required for the conversion of demethylmenaquinol (DMKH2) to menaquinol (MKH2) and the conversion of 2-polyprenyl-6-methoxy-1,4-benzoquinol (DDMQH2) to 2-polyprenyl-3-methyl-6-methoxy-1,4-benzoquinol (DMQH2). In Pectobacterium carotovorum subsp. carotovorum (strain PC1), this protein is Ubiquinone/menaquinone biosynthesis C-methyltransferase UbiE.